A 220-amino-acid polypeptide reads, in one-letter code: Pyridoxine/pyridoxamine 5'-phosphate oxidase (220 aa).

Substrate is bound by residues 13–16 (RVEY) and Lys77. Residues 72–77 (RTVLCK), 87–88 (FT), Lys94, and Gln116 contribute to the FMN site. 3 residues coordinate substrate: Tyr134, Arg138, and Ser142. FMN is bound by residues 151-152 (QS) and Trp197. Substrate is bound at residue 203-205 (RLH). Arg207 serves as a coordination point for FMN.

The protein belongs to the pyridoxamine 5'-phosphate oxidase family. In terms of assembly, homodimer. Requires FMN as cofactor.

It carries out the reaction pyridoxamine 5'-phosphate + O2 + H2O = pyridoxal 5'-phosphate + H2O2 + NH4(+). It catalyses the reaction pyridoxine 5'-phosphate + O2 = pyridoxal 5'-phosphate + H2O2. Its pathway is cofactor metabolism; pyridoxal 5'-phosphate salvage; pyridoxal 5'-phosphate from pyridoxamine 5'-phosphate: step 1/1. The protein operates within cofactor metabolism; pyridoxal 5'-phosphate salvage; pyridoxal 5'-phosphate from pyridoxine 5'-phosphate: step 1/1. Its function is as follows. Catalyzes the oxidation of either pyridoxine 5'-phosphate (PNP) or pyridoxamine 5'-phosphate (PMP) into pyridoxal 5'-phosphate (PLP). This Mycolicibacterium paratuberculosis (strain ATCC BAA-968 / K-10) (Mycobacterium paratuberculosis) protein is Pyridoxine/pyridoxamine 5'-phosphate oxidase.